Consider the following 220-residue polypeptide: Octanoyltransferase (220 aa).

In terms of domain architecture, BPL/LPL catalytic spans 27–208 (PGTADEIWLC…QLARAHGQAV (182 aa)). Substrate contacts are provided by residues 66–73 (RGGQVTYH), 139–141 (ALG), and 152–154 (GLA). Residue Cys170 is the Acyl-thioester intermediate of the active site.

The protein belongs to the LipB family.

It is found in the cytoplasm. The enzyme catalyses octanoyl-[ACP] + L-lysyl-[protein] = N(6)-octanoyl-L-lysyl-[protein] + holo-[ACP] + H(+). It functions in the pathway protein modification; protein lipoylation via endogenous pathway; protein N(6)-(lipoyl)lysine from octanoyl-[acyl-carrier-protein]: step 1/2. In terms of biological role, catalyzes the transfer of endogenously produced octanoic acid from octanoyl-acyl-carrier-protein onto the lipoyl domains of lipoate-dependent enzymes. Lipoyl-ACP can also act as a substrate although octanoyl-ACP is likely to be the physiological substrate. This chain is Octanoyltransferase, found in Bordetella pertussis (strain Tohama I / ATCC BAA-589 / NCTC 13251).